A 307-amino-acid chain; its full sequence is MSKKLKAAIIGPGNIGTDLVMKMLRSEWIEPVWMVGIDPESDGLKRAREFGLKTTAEGVDGLLPHVLEDDIRIAFDATSAYVHAENSRKLNELGVLMVDLTPAAIGPYCVPPVNLKQHVGTLEMNVNMVTCGGQATIPMVAAVSRVQPVAYGEIVATVSSRSIGPGTRKNIDEFTRTTAGAIEQVGGAKEGKAIIVVNPAEPPLMMRDTIHCLTETEPDQDAITASVHAMIAEVQKYVPGYRLKNGPVFDGNRVSIFMEVEGLGDYLPKYAGNLDIMTAAALRTGEMFAEEIASGTIQLPRREAALA.

Cys131 serves as the catalytic Acyl-thioester intermediate. NAD(+) contacts are provided by residues 162–170 and Asn273; that span reads SIGPGTRKN.

It belongs to the acetaldehyde dehydrogenase family.

It catalyses the reaction acetaldehyde + NAD(+) + CoA = acetyl-CoA + NADH + H(+). In Stutzerimonas stutzeri (Pseudomonas stutzeri), this protein is Acetaldehyde dehydrogenase (nahO).